Reading from the N-terminus, the 892-residue chain is Translation initiation factor IF-2 (892 aa).

2 disordered regions span residues 144–176 (QQRL…QKTE) and 189–298 (SNSV…SGAH). Over residues 207-219 (LPRTVRPTPAARP) the composition is skewed to low complexity. The tr-type G domain maps to 391 to 560 (PRPPVVTIMG…SIQAEVLELK (170 aa)). GTP is bound by residues 400–407 (GHVDHGKT), 446–450 (DTPGH), and 500–503 (SKID).

Belongs to the TRAFAC class translation factor GTPase superfamily. Classic translation factor GTPase family. IF-2 subfamily.

It is found in the cytoplasm. Functionally, one of the essential components for the initiation of protein synthesis. Protects formylmethionyl-tRNA from spontaneous hydrolysis and promotes its binding to the 30S ribosomal subunits. Also involved in the hydrolysis of GTP during the formation of the 70S ribosomal complex. The chain is Translation initiation factor IF-2 from Xylella fastidiosa (strain M12).